The following is a 233-amino-acid chain: Phosphoribosylformylglycinamidine synthase subunit PurQ (233 aa).

In terms of domain architecture, Glutamine amidotransferase type-1 spans 3–233 (AAILVFPGIN…GLAQHLEKAA (231 aa)). Catalysis depends on Cys87, which acts as the Nucleophile. Residues His204 and Glu206 contribute to the active site.

Part of the FGAM synthase complex composed of 1 PurL, 1 PurQ and 2 PurS subunits.

It localises to the cytoplasm. The enzyme catalyses N(2)-formyl-N(1)-(5-phospho-beta-D-ribosyl)glycinamide + L-glutamine + ATP + H2O = 2-formamido-N(1)-(5-O-phospho-beta-D-ribosyl)acetamidine + L-glutamate + ADP + phosphate + H(+). The catalysed reaction is L-glutamine + H2O = L-glutamate + NH4(+). Its pathway is purine metabolism; IMP biosynthesis via de novo pathway; 5-amino-1-(5-phospho-D-ribosyl)imidazole from N(2)-formyl-N(1)-(5-phospho-D-ribosyl)glycinamide: step 1/2. In terms of biological role, part of the phosphoribosylformylglycinamidine synthase complex involved in the purines biosynthetic pathway. Catalyzes the ATP-dependent conversion of formylglycinamide ribonucleotide (FGAR) and glutamine to yield formylglycinamidine ribonucleotide (FGAM) and glutamate. The FGAM synthase complex is composed of three subunits. PurQ produces an ammonia molecule by converting glutamine to glutamate. PurL transfers the ammonia molecule to FGAR to form FGAM in an ATP-dependent manner. PurS interacts with PurQ and PurL and is thought to assist in the transfer of the ammonia molecule from PurQ to PurL. The sequence is that of Phosphoribosylformylglycinamidine synthase subunit PurQ from Bradyrhizobium diazoefficiens (strain JCM 10833 / BCRC 13528 / IAM 13628 / NBRC 14792 / USDA 110).